Reading from the N-terminus, the 277-residue chain is Undecaprenyl-diphosphatase (277 aa).

The next 5 membrane-spanning stretches (helical) occupy residues 85–105 (VNIV…AGAI), 109–129 (LFAP…ILWV), 188–208 (ATEF…VYSV), 218–238 (ADIP…FLCV), and 256–276 (YRIG…VVWA).

Belongs to the UppP family.

The protein localises to the cell inner membrane. The enzyme catalyses di-trans,octa-cis-undecaprenyl diphosphate + H2O = di-trans,octa-cis-undecaprenyl phosphate + phosphate + H(+). In terms of biological role, catalyzes the dephosphorylation of undecaprenyl diphosphate (UPP). Confers resistance to bacitracin. This Herminiimonas arsenicoxydans protein is Undecaprenyl-diphosphatase.